Consider the following 347-residue polypeptide: Dolichyl-diphosphooligosaccharide--protein glycosyltransferase subunit TUSC3 (347 aa).

The first 41 residues, 1-41 (MGARGAPSRRRQAGRRPRYLPTGSFPFLLLLLLLCIQLGGG), serve as a signal peptide directing secretion. Residues 42-196 (QKKKENLLAE…DVHIRVFRPP (155 aa)) lie on the Lumenal side of the membrane. A Thioredoxin domain is found at 59-187 (WSSRRSVFRM…LAKWIADRTD (129 aa)). Asn-83 carries N-linked (GlcNAc...) asparagine glycosylation. Cys-99 and Cys-102 are disulfide-bonded. The chain crosses the membrane as a helical span at residues 197 to 217 (NYSGTIALALLVSLVGGLLYL). Topologically, residues 218 to 221 (RRNN) are cytoplasmic. The helical transmembrane segment at 222–242 (LEFIYNKTGWAMVSLCIVFAM) threads the bilayer. Residues 243–276 (TSGQMWNHIRGPPYAHKNPHNGQVSYIHGSSQVQ) are Lumenal-facing. Residues 277 to 297 (FVAESHIILVLNAAITMGMDL) traverse the membrane as a helical segment. Residues 298–312 (LNEAATSKGDVGKRR) are Cytoplasmic-facing. Residues 313 to 333 (IICLVGLGLVVFFFSFLLSIF) traverse the membrane as a helical segment. Topologically, residues 334 to 347 (RSKYHGYPYSFLIK) are lumenal.

It belongs to the OST3/OST6 family. Accessory component of the STT3B-containing form of the oligosaccharyltransferase (OST) complex. OST exists in two different complex forms which contain common core subunits RPN1, RPN2, OST48, OST4, DAD1 and TMEM258, either STT3A or STT3B as catalytic subunits, and form-specific accessory subunits. OST can form stable complexes with the Sec61 complex or with both the Sec61 and TRAP complexes. The association of TUSC3 or MAGT1 with the STT3B-containing complex seems to be mutually exclusvice.

It is found in the endoplasmic reticulum membrane. It functions in the pathway protein modification; protein glycosylation. Acts as accessory component of the N-oligosaccharyl transferase (OST) complex which catalyzes the transfer of a high mannose oligosaccharide from a lipid-linked oligosaccharide donor to an asparagine residue within an Asn-X-Ser/Thr consensus motif in nascent polypeptide chains. Involved in N-glycosylation of STT3B-dependent substrates. Specifically required for the glycosylation of a subset of acceptor sites that are near cysteine residues; in this function seems to act redundantly with MAGT1. In its oxidized form proposed to form transient mixed disulfides with a glycoprotein substrate to facilitate access of STT3B to the unmodified acceptor site. Also has oxidoreductase-independent functions in the STT3B-containing OST complex possibly involving substrate recognition. Could indirectly play a role in Mg(2+) transport. This chain is Dolichyl-diphosphooligosaccharide--protein glycosyltransferase subunit TUSC3 (TUSC3), found in Bos taurus (Bovine).